The primary structure comprises 172 residues: Adenine phosphoribosyltransferase (172 aa).

It belongs to the purine/pyrimidine phosphoribosyltransferase family. In terms of assembly, homodimer.

It localises to the cytoplasm. It carries out the reaction AMP + diphosphate = 5-phospho-alpha-D-ribose 1-diphosphate + adenine. It functions in the pathway purine metabolism; AMP biosynthesis via salvage pathway; AMP from adenine: step 1/1. Functionally, catalyzes a salvage reaction resulting in the formation of AMP, that is energically less costly than de novo synthesis. The sequence is that of Adenine phosphoribosyltransferase from Streptococcus agalactiae serotype III (strain NEM316).